Reading from the N-terminus, the 372-residue chain is Heat shock 70 kDa protein II (372 aa).

It belongs to the heat shock protein 70 family.

In Paracentrotus lividus (Common sea urchin), this protein is Heat shock 70 kDa protein II (HSP70II).